The primary structure comprises 345 residues: Protein Tob1 (345 aa).

A Bipartite nuclear localization signal motif is present at residues 22–39; sequence RRRVNIFGEELERLLKKK. The tract at residues 82 to 92 is important for nuclear localization; the sequence is VRGNLPQDLSV. Residues 144–160 show a composition bias toward low complexity; that stretch reads DPASSVSSSPSPPFGHS. A disordered region spans residues 144–171; that stretch reads DPASSVSSSPSPPFGHSAAVSPTFMPRS. The interval 161–218 is required for interaction with CPEB3; it reads AAVSPTFMPRSTQPLTFTTATFAATKFGSTKMKNSGRSNKVARTSPINLGLNVNDLLK. Threonine 204 is subject to Phosphothreonine. The Nuclear export signal signature appears at 226–234; the sequence is MHSLYGLGL. The interval 231-267 is disordered; it reads GLGLGSQQQPQQQQQPAQPPPPPPPPQQQQQQKTSAL. Residues 237–246 are compositionally biased toward low complexity; that stretch reads QQQPQQQQQP. Residues 247-257 are compositionally biased toward pro residues; it reads AQPPPPPPPPQ.

It belongs to the BTG family. Interacts with ERBB2. Interacts with CNOT7. Interacts with CPEB3 (via C-terminal RNA-binding region); recruits CNOT7 to CPEB3 to form a ternary complex required for mRNA deadenylation and decay. Interacts with CNOT8. Interacts with CPEB4. Phosphorylated on Ser and Thr residues. Ubiquitous.

The protein localises to the cytoplasm. Its subcellular location is the nucleus. Functionally, anti-proliferative protein; the function is mediated by association with deadenylase subunits of the CCR4-NOT complex. Mediates CPEB3-accelerated mRNA deadenylation by binding to CPEB3 and recruiting CNOT7 which leads to target mRNA deadenylation and decay. The chain is Protein Tob1 (TOB1) from Homo sapiens (Human).